A 244-amino-acid chain; its full sequence is Haloacid dehalogenase-like hydrolase domain-containing protein 3 (244 aa).

It belongs to the HAD-like hydrolase superfamily.

This is Haloacid dehalogenase-like hydrolase domain-containing protein 3 (hdhd3) from Xenopus laevis (African clawed frog).